The sequence spans 332 residues: Glycerol-3-phosphate dehydrogenase [NAD(P)+] (332 aa).

Ser-10, Trp-11, His-31, Arg-32, and Lys-105 together coordinate NADPH. Lys-105, Gly-136, and Ser-138 together coordinate sn-glycerol 3-phosphate. Ala-140 lines the NADPH pocket. Lys-191, Asp-244, Ser-254, Arg-255, and Asn-256 together coordinate sn-glycerol 3-phosphate. Lys-191 (proton acceptor) is an active-site residue. Arg-255 lines the NADPH pocket. NADPH contacts are provided by Val-279 and Glu-281.

It belongs to the NAD-dependent glycerol-3-phosphate dehydrogenase family.

The protein resides in the cytoplasm. The catalysed reaction is sn-glycerol 3-phosphate + NAD(+) = dihydroxyacetone phosphate + NADH + H(+). It carries out the reaction sn-glycerol 3-phosphate + NADP(+) = dihydroxyacetone phosphate + NADPH + H(+). Its pathway is membrane lipid metabolism; glycerophospholipid metabolism. Catalyzes the reduction of the glycolytic intermediate dihydroxyacetone phosphate (DHAP) to sn-glycerol 3-phosphate (G3P), the key precursor for phospholipid synthesis. This chain is Glycerol-3-phosphate dehydrogenase [NAD(P)+], found in Prosthecochloris aestuarii (strain DSM 271 / SK 413).